The following is a 492-amino-acid chain: Alpha-2-antiplasmin (492 aa).

Residues 1–22 form the signal peptide; sequence MALLWGLLALILSCLSSLCSAQ. A propeptide spanning residues 23–40 is cleaved from the precursor; sequence FSPVSTMEPLDLQLMDGQ. The segment at 56 to 76 is disordered; it reads QEPGGQIAPKKAPEDCKLSPT. An intrachain disulfide couples Cys71 to Cys144. Residues Asn127, Asn249, Asn296, Asn310, and Asn317 are each glycosylated (N-linked (GlcNAc...) asparagine). Residues 433–492 are disordered; sequence SVRNPNPGAQPERKEQQDSPDGKDSFQDHKGLPRGDKPFDPDLKLGPPSEEDYAQPSSPK. A compositionally biased stretch (basic and acidic residues) spans 443–475; sequence PERKEQQDSPDGKDSFQDHKGLPRGDKPFDPDL. Tyr485 is subject to Sulfotyrosine.

This sequence belongs to the serpin family. Forms protease inhibiting heterodimer with TMPRSS7. Proteolytically cleaved at Pro-31 by both the prolyl endopeptidase FAP form and antiplasmin-cleaving enzyme FAP soluble form to generate mature alpha-2-antiplasmin. As to expression, expressed by the liver and secreted in plasma.

Its subcellular location is the secreted. Serine protease inhibitor. The major targets of this inhibitor are plasmin and trypsin, but it also inactivates matriptase-3/TMPRSS7 and chymotrypsin. This Bos taurus (Bovine) protein is Alpha-2-antiplasmin (SERPINF2).